A 383-amino-acid polypeptide reads, in one-letter code: Acetylornithine deacetylase (383 aa).

Zn(2+) is bound at residue His80. Residue Asp82 is part of the active site. Position 112 (Asp112) interacts with Zn(2+). Glu144 is a catalytic residue. Zn(2+) contacts are provided by Glu145, Glu169, and His355.

Belongs to the peptidase M20A family. ArgE subfamily. In terms of assembly, homodimer. Zn(2+) serves as cofactor. Requires Co(2+) as cofactor. The cofactor is glutathione.

It is found in the cytoplasm. The catalysed reaction is N(2)-acetyl-L-ornithine + H2O = L-ornithine + acetate. The protein operates within amino-acid biosynthesis; L-arginine biosynthesis; L-ornithine from N(2)-acetyl-L-ornithine (linear): step 1/1. In terms of biological role, catalyzes the hydrolysis of the amide bond of N(2)-acetylated L-amino acids. Cleaves the acetyl group from N-acetyl-L-ornithine to form L-ornithine, an intermediate in L-arginine biosynthesis pathway, and a branchpoint in the synthesis of polyamines. The sequence is that of Acetylornithine deacetylase from Salmonella heidelberg (strain SL476).